The primary structure comprises 84 residues: Sulfur carrier protein TusA (84 aa).

Cys-21 serves as the catalytic Cysteine persulfide intermediate.

This sequence belongs to the sulfur carrier protein TusA family.

It localises to the cytoplasm. Sulfur carrier protein which probably makes part of a sulfur-relay system. The polypeptide is Sulfur carrier protein TusA (Pseudomonas syringae pv. tomato (strain ATCC BAA-871 / DC3000)).